Here is a 340-residue protein sequence, read N- to C-terminus: tRNA N6-adenosine threonylcarbamoyltransferase (340 aa).

Fe cation-binding residues include histidine 109 and histidine 113. Substrate is bound by residues 132–136 (AISGA), aspartate 165, glycine 178, and asparagine 277. Residue aspartate 302 participates in Fe cation binding.

The protein belongs to the KAE1 / TsaD family. Fe(2+) is required as a cofactor.

Its subcellular location is the cytoplasm. It carries out the reaction L-threonylcarbamoyladenylate + adenosine(37) in tRNA = N(6)-L-threonylcarbamoyladenosine(37) in tRNA + AMP + H(+). Its function is as follows. Required for the formation of a threonylcarbamoyl group on adenosine at position 37 (t(6)A37) in tRNAs that read codons beginning with adenine. Is involved in the transfer of the threonylcarbamoyl moiety of threonylcarbamoyl-AMP (TC-AMP) to the N6 group of A37, together with TsaE and TsaB. TsaD likely plays a direct catalytic role in this reaction. The sequence is that of tRNA N6-adenosine threonylcarbamoyltransferase from Chlamydia muridarum (strain MoPn / Nigg).